A 75-amino-acid chain; its full sequence is uncharacterized protein (75 aa).

The N-terminal stretch at 1-26 (MQFLERHFSVLFPVLFFFSFYPISFA) is a signal peptide.

It localises to the secreted. This is an uncharacterized protein from Schizosaccharomyces pombe (strain 972 / ATCC 24843) (Fission yeast).